The following is a 92-amino-acid chain: C-C motif chemokine 4 (92 aa).

Residues 1-23 form the signal peptide; sequence MKLCVTVLSLLVLVAAFCSPALS. 2 cysteine pairs are disulfide-bonded: Cys34/Cys58 and Cys35/Cys74.

Belongs to the intercrine beta (chemokine CC) family. As to quaternary structure, homodimer. Interacts with CCR5.

Its subcellular location is the secreted. Functionally, monokine with inflammatory and chemokinetic properties. The protein is C-C motif chemokine 4 (CCL4) of Canis lupus familiaris (Dog).